The sequence spans 300 residues: MQSTLSQSPGSRFSQYMALTKPRVTQLAVFCAVIGMFLATPGMVPWHVLIGGTVGIWLLAGAAFAINCLVEQKIDAMMRRTAWRPSARGEITTPQILLFSAVLGSVGAWTLYTFTNPLTMWLTIATFVGYAVIYTLLLKPMTPQNIVIGGASGAMPPALGWAAVTGAVPGDAWILVLIIFVWTPPHFWVLALYRRKDYENAGLPMLPVTHGEKFTRLHILLYTVILFAVTLMPFISGMSGAVYLTSAVLLGAVFLAYAWKIHRDYSDELARKAFRYSIVYLSLLFAALLVDHYARPLLGV.

A run of 9 helical transmembrane segments spans residues 24 to 44, 46 to 66, 94 to 114, 118 to 138, 146 to 166, 172 to 192, 217 to 237, 239 to 259, and 278 to 298; these read VTQLAVFCAVIGMFLATPGMV, WHVLIGGTVGIWLLAGAAFAI, PQILLFSAVLGSVGAWTLYTF, LTMWLTIATFVGYAVIYTLLL, IVIGGASGAMPPALGWAAVTG, AWILVLIIFVWTPPHFWVLAL, LHILLYTVILFAVTLMPFISG, SGAVYLTSAVLLGAVFLAYAW, and IVYLSLLFAALLVDHYARPLL.

The protein belongs to the UbiA prenyltransferase family. Protoheme IX farnesyltransferase subfamily.

The protein resides in the cell inner membrane. It catalyses the reaction heme b + (2E,6E)-farnesyl diphosphate + H2O = Fe(II)-heme o + diphosphate. It functions in the pathway porphyrin-containing compound metabolism; heme O biosynthesis; heme O from protoheme: step 1/1. Converts heme B (protoheme IX) to heme O by substitution of the vinyl group on carbon 2 of heme B porphyrin ring with a hydroxyethyl farnesyl side group. This chain is Protoheme IX farnesyltransferase, found in Burkholderia cenocepacia (strain HI2424).